A 118-amino-acid polypeptide reads, in one-letter code: Small ribosomal subunit protein uS13 (118 aa).

Residues 94–118 (SLPLRGQRTKTNARTRKGPRKPIRK) form a disordered region.

This sequence belongs to the universal ribosomal protein uS13 family. Part of the 30S ribosomal subunit. Forms a loose heterodimer with protein S19. Forms two bridges to the 50S subunit in the 70S ribosome.

In terms of biological role, located at the top of the head of the 30S subunit, it contacts several helices of the 16S rRNA. In the 70S ribosome it contacts the 23S rRNA (bridge B1a) and protein L5 of the 50S subunit (bridge B1b), connecting the 2 subunits; these bridges are implicated in subunit movement. Contacts the tRNAs in the A and P-sites. The protein is Small ribosomal subunit protein uS13 of Shewanella sediminis (strain HAW-EB3).